Reading from the N-terminus, the 206-residue chain is Uridine kinase (206 aa).

Residue 11–18 (GGTGSGKS) participates in ATP binding.

This sequence belongs to the uridine kinase family.

It localises to the cytoplasm. It carries out the reaction uridine + ATP = UMP + ADP + H(+). The catalysed reaction is cytidine + ATP = CMP + ADP + H(+). It participates in pyrimidine metabolism; CTP biosynthesis via salvage pathway; CTP from cytidine: step 1/3. Its pathway is pyrimidine metabolism; UMP biosynthesis via salvage pathway; UMP from uridine: step 1/1. The chain is Uridine kinase from Clostridium botulinum (strain Okra / Type B1).